Here is a 512-residue protein sequence, read N- to C-terminus: Maturase K (512 aa).

The protein belongs to the intron maturase 2 family. MatK subfamily.

The protein resides in the plastid. Its subcellular location is the chloroplast. In terms of biological role, usually encoded in the trnK tRNA gene intron. Probably assists in splicing its own and other chloroplast group II introns. The chain is Maturase K from Oenothera biennis (German evening primrose).